The sequence spans 142 residues: Secreted RxLR effector protein 161 (142 aa).

Residues 1–27 form the signal peptide; sequence MKNVPYLSAVGAIMYLMVVTRPDLAAA. The RxLR signature appears at 48 to 51; it reads RVLR.

Belongs to the RxLR effector family.

It is found in the secreted. It localises to the host chloroplast envelope. The protein resides in the host nucleus. Functionally, secreted effector that completely suppresses the host cell death induced by cell death-inducing proteins. In Plasmopara viticola (Downy mildew of grapevine), this protein is Secreted RxLR effector protein 161.